A 588-amino-acid chain; its full sequence is Aspartate--tRNA ligase (588 aa).

Glutamate 177 is an L-aspartate binding site. The interval 201–204 (QLFK) is aspartate. Arginine 223 is a binding site for L-aspartate. ATP is bound by residues 223 to 225 (RDE) and glutamine 232. Histidine 451 is an L-aspartate binding site. Residue glutamate 485 participates in ATP binding. Arginine 492 contacts L-aspartate. 537 to 540 (GLDR) contributes to the ATP binding site.

It belongs to the class-II aminoacyl-tRNA synthetase family. Type 1 subfamily. In terms of assembly, homodimer.

It is found in the cytoplasm. It carries out the reaction tRNA(Asp) + L-aspartate + ATP = L-aspartyl-tRNA(Asp) + AMP + diphosphate. Functionally, catalyzes the attachment of L-aspartate to tRNA(Asp) in a two-step reaction: L-aspartate is first activated by ATP to form Asp-AMP and then transferred to the acceptor end of tRNA(Asp). The sequence is that of Aspartate--tRNA ligase from Staphylococcus haemolyticus (strain JCSC1435).